An 861-amino-acid polypeptide reads, in one-letter code: MAEILLTSVINKSVEIAGNLLIQEGKRLYWLKEDIDWLQREMRHIRSYVDNAKAKEAGGDSRVKNLLKDIQELAGDVEDLLDDFLPKIQQSNKFNYCLKRSSFADEFAMEIEKIKRRVVDIDRIRKTYNIIDTDNNNDDCVLLDRRRLFLHADETEIIGLDDDFNMLQAKLLNQDLHYGVVSIVGMPGLGKTTLAKKLYRLIRDQFECSGLVYVSQQPRASEILLDIAKQIGLTEQKMKENLEDNLRSLLKIKRYVILLDDIWDVEIWDDLKLVLPECDSKVGSRMIITSRNSNVGRYIGGESSLHALQPLESEKSFELFTKKIFNFDDNNSWANASPDLVNIGRNIVGRCGGIPLAIVVTAGMLRARERTEHAWNRVLESMGHKVQDGCAKVLALSYNDLPIASRPCFLYFGLYPEDHEIRAFDLINMWIAEKFIVVNSGNRREAEDLAEDVLNDLVSRNLIQLAKRTYNGRISSCRIHDLLHSLCVDLAKESNFFHTAHDAFGDPGNVARLRRITFYSDNVMIEFFRSNPKLEKLRVLFCFAKDPSIFSHMAYFDFKLLHTLVVVMSQSFQAYVTIPSKFGNMTCLRYLRLEGNICGKLPNSIVKLTRLETIDIDRRSLIQPPSGVWESKHLRHLCYRDYGQACNSCFSISSFYPNIYSLHPNNLQTLMWIPDKFFEPRLLHRLINLRKLGILGVSNSTVKMLSIFSPVLKALEVLKLSFSSDPSEQIKLSSYPHIAKLHLNVNRTMALNSQSFPPNLIKLTLAYFSVDRYILAVLKTFPKLRKLKMFICKYNEEKMDLSGEANGYSFPQLEVLHIHSPNGLSEVTCTDDVSMPKLKKLLLTGFHCRISLSERLKKLSK.

The stretch at 63-83 (VKNLLKDIQELAGDVEDLLDD) forms a coiled coil. The NB-ARC domain maps to 162-388 (DDFNMLQAKL…LESMGHKVQD (227 aa)). Residue 185-192 (GMPGLGKT) coordinates ATP. LRR repeat units lie at residues 225-248 (LDIA…NLRS), 305-327 (LHAL…IFNF), 388-411 (DGCA…CFLY), 449-472 (LAED…TYNG), 510-536 (VARL…KLEK), 585-608 (MTCL…IVKL), 609-631 (TRLE…VWES), 652-680 (ISSF…FFEP), 689-710 (LRKL…IFSP), 712-735 (LKAL…LSSY), 736-758 (PHIA…SFPP), 784-810 (LRKL…GYSF), and 811-835 (PQLE…DVSM).

It belongs to the disease resistance NB-LRR family. In terms of assembly, (Microbial infection) Interacts with tobamoviruses mouvement protein (e.g. tobacco mosaic virus (TMV) MP, AC P03583) at the plasma membrane; this interaction triggers defense responses leading to programmed cell death. Binds to HSP90 proteins (e.g. HSP90-1 and Nicotiana benthamiana HSP90-1); this interaction seems required for defense responses toward tobamoviruses.

Its subcellular location is the cell membrane. Functionally, inhibitor of viral mouvements which confers resistance to some tobamoviruses including tomato mosaic virus (ToMV) (e.g. strains L, B7 and ToMV1-2) and tobacco mosaic virus (TMV), but not to resistance-breaking isolates (e.g. LIIA and ToMV2(2)) ToMV and tomato brown rugose fruit virus (ToBRFV). Elicits a hypersensitive reaction in response to avirulent (Avr) movement proteins from resistance inducing tobamoviruses (e.g. ToMV and TMV) strains, thus leading to programmed cell death; this local extreme resistance requires rbcS. This is ToMV resistance protein Tm-2(2) from Solanum lycopersicum (Tomato).